We begin with the raw amino-acid sequence, 451 residues long: Ribonuclease J (451 aa).

His-84, His-86, Asp-88, His-89, His-155, and Asp-177 together coordinate Zn(2+). 384–388 (HVSGH) provides a ligand contact to substrate. His-410 is a Zn(2+) binding site.

Belongs to the metallo-beta-lactamase superfamily. RNA-metabolizing metallo-beta-lactamase-like family. Archaeal RNase J subfamily. In terms of assembly, homodimer. The cofactor is Zn(2+).

The protein resides in the cytoplasm. Inhibited by 1,10-phenanthroline. Its function is as follows. A highly processive 5'-3' exoribonuclease; no evidence has been seen for endonuclease activity. Prefers 5'-phosphate or 5'-hydroxyl ends; 5'-triphosphate substrates are very poorly degraded, does not degrade circular RNA. Does not degrade pre-tRNA(Trp) suggesting it is inhibited by strong secondary structures. Also degrades ssNDA but not dsDNA. The protein is Ribonuclease J of Pyrococcus abyssi (strain GE5 / Orsay).